An 802-amino-acid polypeptide reads, in one-letter code: Putative transcriptional regulator cudA (802 aa).

Disordered stretches follow at residues 1-148, 154-173, 381-446, and 636-658; these read MNQS…PSAI, ISNN…NLLL, NNIN…NNEN, and QPQQ…QQGQ. The segment covering 25–63 has biased composition (low complexity); sequence NNNNNGNNGMMMNQQQMQQHVVPHLHHLQQQQQQPQQQQ. Positions 69-88 are enriched in polar residues; that stretch reads DYSNSPNGTTNGSTMSPNCI. Positions 89–128 are enriched in low complexity; it reads NTNNNNNNNNNNNNNSNNNNNNNNNASNNLTSNKSSSTNT. The span at 129 to 142 shows a compositional bias: polar residues; that stretch reads PQIGQLQASPANLT. The span at 381-445 shows a compositional bias: low complexity; that stretch reads NNINNNNNIN…CNNNNNNNNE (65 aa).

As to expression, expressed in the prestalk cells that constitute the slug tip (pstA cells) and in prespore cells (at protein level). Not expressed in the band of prestalk cells that lies behind the slug tip (pstO cells). Highly expressed in pstO derived papilla cells during culmination.

The protein resides in the nucleus. It is found in the nucleoplasm. Essential for normal culmination. May function as a transcriptional regulator. The sequence is that of Putative transcriptional regulator cudA (cudA) from Dictyostelium discoideum (Social amoeba).